Reading from the N-terminus, the 356-residue chain is Carbamoyl phosphate synthase small chain (356 aa).

The segment at Met1 to Ile160 is CPSase. L-glutamine contacts are provided by Ser45, Gly211, and Gly213. The Glutamine amidotransferase type-1 domain maps to Lys163–Arg350. Cys238 serves as the catalytic Nucleophile. L-glutamine contacts are provided by Leu239, Gln242, Asn280, Gly282, and Tyr283. Residues His323 and Glu325 contribute to the active site.

It belongs to the CarA family. Composed of two chains; the small (or glutamine) chain promotes the hydrolysis of glutamine to ammonia, which is used by the large (or ammonia) chain to synthesize carbamoyl phosphate. Tetramer of heterodimers (alpha,beta)4.

It carries out the reaction hydrogencarbonate + L-glutamine + 2 ATP + H2O = carbamoyl phosphate + L-glutamate + 2 ADP + phosphate + 2 H(+). The enzyme catalyses L-glutamine + H2O = L-glutamate + NH4(+). It functions in the pathway amino-acid biosynthesis; L-arginine biosynthesis; carbamoyl phosphate from bicarbonate: step 1/1. The protein operates within pyrimidine metabolism; UMP biosynthesis via de novo pathway; (S)-dihydroorotate from bicarbonate: step 1/3. Its function is as follows. Small subunit of the glutamine-dependent carbamoyl phosphate synthetase (CPSase). CPSase catalyzes the formation of carbamoyl phosphate from the ammonia moiety of glutamine, carbonate, and phosphate donated by ATP, constituting the first step of 2 biosynthetic pathways, one leading to arginine and/or urea and the other to pyrimidine nucleotides. The small subunit (glutamine amidotransferase) binds and cleaves glutamine to supply the large subunit with the substrate ammonia. This chain is Carbamoyl phosphate synthase small chain, found in Caldanaerobacter subterraneus subsp. tengcongensis (strain DSM 15242 / JCM 11007 / NBRC 100824 / MB4) (Thermoanaerobacter tengcongensis).